Reading from the N-terminus, the 201-residue chain is MQSSPLLENLIEHLRCLPGVGPKSAQRMAYHLLQRDRSGGMNLAGALTEAMSKIGHCTHCRTFTEEESCAICNNPRRQNSGFLCVVEQPSDIPAIEQTGQFSGRYFVLMGHLSPLDGIGPKEIGLDLLQKRLQHESFYEVILATNPTVEGEATANYIAEMCFQHNIKVSRIAHGIPVGGELETVDGTTLSHSLIGRREIQL.

Residues 57 to 72 (CTHCRTFTEEESCAIC) form a C4-type zinc finger. The Toprim domain occupies 81–176 (GFLCVVEQPS…KVSRIAHGIP (96 aa)).

The protein belongs to the RecR family.

In terms of biological role, may play a role in DNA repair. It seems to be involved in an RecBC-independent recombinational process of DNA repair. It may act with RecF and RecO. The chain is Recombination protein RecR from Histophilus somni (strain 2336) (Haemophilus somnus).